A 791-amino-acid chain; its full sequence is RAS guanyl-releasing protein 1 (791 aa).

An N-terminal Ras-GEF domain is found at 49 to 172; that stretch reads LGKLSKGASL…RLIDTAQINS (124 aa). The ras exchanger motif region; required for transforming activity stretch occupies residues 53 to 106; sequence SKGASLDELIQMCIQAFDLDGNMGQNNELLQIMLTMHGFLIPSTELLIKLRTLY. The Ras-GEF domain maps to 201 to 432; sequence EPQELAEHLT…YELSYAREPR (232 aa). EF-hand domains follow at residues 466–501 and 502–528; these read HVQRMVDSVFKNYDLDQDGYISQEEFEKIAASFPFS and FCVMDKDREGLISRQEITAYFMRASSI. Residues Asp479, Asp481, Asp483, Tyr485, Glu490, Asp506, Asp508, Glu510, and Glu517 each coordinate Ca(2+). The segment at 537–587 adopts a Phorbol-ester/DAG-type zinc-finger fold; the sequence is LHNFQETTYLRPTFCDNCAGFLWGVIKQGYRCKDCGMNCHKQCKELVVFEC. The interval 671 to 715 is disordered; that stretch reads TQTENETQSLCLQVPSPPRSRTPDLTSHLPISPMPSPCPSPVPTR. The segment covering 672–681 has biased composition (polar residues); it reads QTENETQSLC. Positions 702 to 712 are enriched in pro residues; it reads SPMPSPCPSPV. A coiled-coil region spans residues 728-783; that stretch reads IRKARAELRGGKAGIQELEKEKVFLKEENTALKIQLKDAHRRVETLRAELRKYVLD.

This sequence belongs to the RASGRP family.

The protein localises to the cytoplasm. It is found in the cytosol. The protein resides in the cell membrane. It localises to the golgi apparatus membrane. Its subcellular location is the endoplasmic reticulum membrane. With respect to regulation, regulated by F-actin polymerization and probably by calcium. In terms of biological role, functions as a diacylglycerol (DAG)-regulated nucleotide exchange factor specifically activating Ras through the exchange of bound GDP for GTP. The sequence is that of RAS guanyl-releasing protein 1 (rasgrp1) from Xenopus laevis (African clawed frog).